We begin with the raw amino-acid sequence, 117 residues long: 5-hydroxyisourate hydrolase (117 aa).

Residues His7, Arg45, and Tyr114 each contribute to the substrate site.

This sequence belongs to the transthyretin family. 5-hydroxyisourate hydrolase subfamily. As to quaternary structure, homotetramer.

It carries out the reaction 5-hydroxyisourate + H2O = 5-hydroxy-2-oxo-4-ureido-2,5-dihydro-1H-imidazole-5-carboxylate + H(+). Functionally, catalyzes the hydrolysis of 5-hydroxyisourate (HIU) to 2-oxo-4-hydroxy-4-carboxy-5-ureidoimidazoline (OHCU). This is 5-hydroxyisourate hydrolase from Ralstonia nicotianae (strain ATCC BAA-1114 / GMI1000) (Ralstonia solanacearum).